The sequence spans 98 residues: NADH-ubiquinone oxidoreductase chain 4L (98 aa).

Helical transmembrane passes span methionine 1–isoleucine 21, leucine 26–leucine 46, and leucine 61–valine 81.

This sequence belongs to the complex I subunit 4L family. As to quaternary structure, core subunit of respiratory chain NADH dehydrogenase (Complex I) which is composed of 45 different subunits.

The protein resides in the mitochondrion inner membrane. The catalysed reaction is a ubiquinone + NADH + 5 H(+)(in) = a ubiquinol + NAD(+) + 4 H(+)(out). Core subunit of the mitochondrial membrane respiratory chain NADH dehydrogenase (Complex I) which catalyzes electron transfer from NADH through the respiratory chain, using ubiquinone as an electron acceptor. Part of the enzyme membrane arm which is embedded in the lipid bilayer and involved in proton translocation. The sequence is that of NADH-ubiquinone oxidoreductase chain 4L (MT-ND4L) from Nycticebus coucang (Slow loris).